Here is a 132-residue protein sequence, read N- to C-terminus: Small ribosomal subunit protein uS8 (132 aa).

The protein belongs to the universal ribosomal protein uS8 family. Part of the 30S ribosomal subunit. Contacts proteins S5 and S12.

Its function is as follows. One of the primary rRNA binding proteins, it binds directly to 16S rRNA central domain where it helps coordinate assembly of the platform of the 30S subunit. In Mesorhizobium japonicum (strain LMG 29417 / CECT 9101 / MAFF 303099) (Mesorhizobium loti (strain MAFF 303099)), this protein is Small ribosomal subunit protein uS8.